Reading from the N-terminus, the 212-residue chain is 2-C-methyl-D-erythritol 4-phosphate cytidylyltransferase (212 aa).

Belongs to the IspD/TarI cytidylyltransferase family. IspD subfamily.

The catalysed reaction is 2-C-methyl-D-erythritol 4-phosphate + CTP + H(+) = 4-CDP-2-C-methyl-D-erythritol + diphosphate. It functions in the pathway isoprenoid biosynthesis; isopentenyl diphosphate biosynthesis via DXP pathway; isopentenyl diphosphate from 1-deoxy-D-xylulose 5-phosphate: step 2/6. Its function is as follows. Catalyzes the formation of 4-diphosphocytidyl-2-C-methyl-D-erythritol from CTP and 2-C-methyl-D-erythritol 4-phosphate (MEP). This chain is 2-C-methyl-D-erythritol 4-phosphate cytidylyltransferase, found in Chlamydia caviae (strain ATCC VR-813 / DSM 19441 / 03DC25 / GPIC) (Chlamydophila caviae).